The primary structure comprises 252 residues: Phosphoribosyl-ATP pyrophosphatase (252 aa).

Belongs to the PRA-PH family.

The protein localises to the cytoplasm. It carries out the reaction 1-(5-phospho-beta-D-ribosyl)-ATP + H2O = 1-(5-phospho-beta-D-ribosyl)-5'-AMP + diphosphate + H(+). Its pathway is amino-acid biosynthesis; L-histidine biosynthesis; L-histidine from 5-phospho-alpha-D-ribose 1-diphosphate: step 2/9. In Magnetococcus marinus (strain ATCC BAA-1437 / JCM 17883 / MC-1), this protein is Phosphoribosyl-ATP pyrophosphatase.